The sequence spans 551 residues: Arginine--tRNA ligase (551 aa).

Residues 123-133 (ANPTGPLTIGR) carry the 'HIGH' region motif.

It belongs to the class-I aminoacyl-tRNA synthetase family. As to quaternary structure, monomer.

The protein localises to the cytoplasm. The enzyme catalyses tRNA(Arg) + L-arginine + ATP = L-arginyl-tRNA(Arg) + AMP + diphosphate. The polypeptide is Arginine--tRNA ligase (Chlorobaculum parvum (strain DSM 263 / NCIMB 8327) (Chlorobium vibrioforme subsp. thiosulfatophilum)).